Here is a 260-residue protein sequence, read N- to C-terminus: Snake venom serine proteinase 4a (260 aa).

Residues 1–18 (MVLIRVLANLLILQLSYA) form the signal peptide. Positions 19 to 24 (QMSSEL) are excised as a propeptide. One can recognise a Peptidase S1 domain in the interval 25–251 (VTGGDECNRN…HLDWIQRIIA (227 aa)). Cystine bridges form between Cys31-Cys163, Cys50-Cys66, Cys98-Cys258, Cys142-Cys212, Cys174-Cys191, and Cys202-Cys227. The active-site Charge relay system is the His65. Residue Asn103 is glycosylated (N-linked (GlcNAc...) asparagine). Asp110 serves as the catalytic Charge relay system. Residue Ser206 is the Charge relay system of the active site.

This sequence belongs to the peptidase S1 family. Snake venom subfamily. As to quaternary structure, monomer. Expressed by the venom gland.

The protein resides in the secreted. Snake venom serine protease that may act in the hemostasis system of the prey. In Crotalus adamanteus (Eastern diamondback rattlesnake), this protein is Snake venom serine proteinase 4a.